Here is a 629-residue protein sequence, read N- to C-terminus: Protein EDS1B (629 aa).

The active-site Nucleophile is Ser123. Residues Asp187 and His317 each act as charge relay system in the active site.

As to quaternary structure, interacts (via N-terminus) with PAD4 and SAG101. Part of a nuclear complex made of EDS1, PAD4 and SAG101, that can be redirected to the cytoplasm in the presence of an extranuclear form of EDS1. Does not interact with itself or with EDS1.

It is found in the nucleus. The protein localises to the cytoplasm. Functionally, acts as a second functional copy of EDS1. Can mediate HRT-mediated resistance to turnip crinkle virus. The chain is Protein EDS1B (EDS1B) from Arabidopsis thaliana (Mouse-ear cress).